The following is a 177-amino-acid chain: Respiratory supercomplex factor 1, mitochondrial (177 aa).

In terms of domain architecture, HIG1 spans 3-94; sequence DSTRVATVYP…AAKEKAELEA (92 aa). A run of 2 helical transmembrane segments spans residues 31-48 and 61-83; these read WVPL…MSAV and WMRA…SMAL. The stretch at 83 to 129 forms a coiled coil; the sequence is LKAAKEKAELEAANAPELTQEQIRQLEKEKEEFEMRLKEAEYSHAQE. The interval 150–177 is disordered; that stretch reads SAAVGVEVDTENRPSTPAPSGKSWWKMW.

It belongs to the RCF1 family. Associates with the respiratory chain complex III/complex IV supercomplex.

Its subcellular location is the mitochondrion membrane. In terms of biological role, cytochrome c oxidase subunit which plays a role in assembly of respiratory supercomplexes. This chain is Respiratory supercomplex factor 1, mitochondrial (RCF1), found in Coprinopsis cinerea (strain Okayama-7 / 130 / ATCC MYA-4618 / FGSC 9003) (Inky cap fungus).